The chain runs to 239 residues: Cytochrome b6-f complex iron-sulfur subunit 1, cyanelle (239 aa).

The transit peptide at 1–60 (MAFTTTAVVAPRGAKITGQSSTCAIQNGKTVAVGTSKQVGSFKPVFAAAKPAKETTFSVS) directs the protein to the cyanelle. The chain crosses the membrane as a helical span at residues 81–101 (LLGAIAGPVAGAGGPFVSFLV). The region spanning 125-221 (VSSWLETHKP…VSVLEDGVVA (97 aa)) is the Rieske domain. The [2Fe-2S] cluster site is built by C167, H169, C185, and H188. Residues C172 and C187 are joined by a disulfide bond.

This sequence belongs to the Rieske iron-sulfur protein family. In terms of assembly, the 4 large subunits of the cytochrome b6-f complex are cytochrome b6, subunit IV (17 kDa polypeptide, petD), cytochrome f and the Rieske protein, while the 4 small subunits are petG, petL, petM and petN. The complex functions as a dimer. [2Fe-2S] cluster is required as a cofactor.

The protein resides in the plastid. It localises to the cyanelle thylakoid membrane. It catalyses the reaction 2 oxidized [plastocyanin] + a plastoquinol + 2 H(+)(in) = 2 reduced [plastocyanin] + a plastoquinone + 4 H(+)(out). Its function is as follows. Component of the cytochrome b6-f complex, which mediates electron transfer between photosystem II (PSII) and photosystem I (PSI), cyclic electron flow around PSI, and state transitions. This chain is Cytochrome b6-f complex iron-sulfur subunit 1, cyanelle (petC-1), found in Cyanophora paradoxa.